An 886-amino-acid polypeptide reads, in one-letter code: DNA mismatch repair protein MutS (886 aa).

627 to 634 (GPNMGGKS) contributes to the ATP binding site. The segment at 834–857 (VECADAPAPSDATHPALDRLRDID) is disordered.

The protein belongs to the DNA mismatch repair MutS family.

In terms of biological role, this protein is involved in the repair of mismatches in DNA. It is possible that it carries out the mismatch recognition step. This protein has a weak ATPase activity. The polypeptide is DNA mismatch repair protein MutS (Burkholderia vietnamiensis (strain G4 / LMG 22486) (Burkholderia cepacia (strain R1808))).